The sequence spans 198 residues: uncharacterized protein (198 aa).

A run of 4 helical transmembrane segments spans residues 20-40 (VIVGVVLGLAGTGALIGGLWA), 70-90 (FFVAPCLMLGLLTVLAVTASV), 107-127 (LAIGLMICAATAAAVGALLVW), and 164-184 (VAATVLWPAGIAALVYAVLAA).

This sequence to M.tuberculosis Rv1591.

The protein resides in the cell membrane. This is an uncharacterized protein from Mycobacterium leprae (strain TN).